The sequence spans 244 residues: UPF0246 protein FMG_1068 (244 aa).

The protein belongs to the UPF0246 family.

The sequence is that of UPF0246 protein FMG_1068 from Finegoldia magna (strain ATCC 29328 / DSM 20472 / WAL 2508) (Peptostreptococcus magnus).